The primary structure comprises 583 residues: MAARRRRSTGGGRARALNESKRVNNGNTAPEDSSPAKKTRRCQRQESKKMPVAGGKANKDRTEDKQDGMPGRSWASKRVSESVKALLLKGKAPVDPECTAKVGKAHVYCEGNDVYDVMLNQTNLQFNNNKYYLIQLLEDDAQRNFSVWMRWGRVGKMGQHSLVACSGNLNKAKEIFQKKFLDKTKNNWEDREKFEKVPGKYDMLQMDYATNTQDEEETKKEESLKSPLKPESQLDLRVQELIKLICNVQAMEEMMMEMKYNTKKAPLGKLTVAQIKAGYQSLKKIEDCIRAGQHGRALMEACNEFYTRIPHDFGLRTPPLIRTQKELSEKIQLLEALGDIEIAIKLVKTELQSPEHPLDQHYRNLHCALRPLDHESYEFKVISQYLQSTHAPTHSDYTMTLLDLFEVEKDGEKEAFREDLHNRMLLWHGSRMSNWVGILSHGLRIAPPEAPITGYMFGKGIYFADMSSKSANYCFASRLKNTGLLLLSEVALGQCNELLEANPKAEGLLQGKHSTKGLGKMAPSSAHFVTLNGSTVPLGPASDTGILNPDGYTLNYNEYIVYNPNQVRMRYLLKVQFNFLQLW.

Residues 1-77 (MAARRRRSTG…GMPGRSWASK (77 aa)) form a disordered region. Positions 1–103 (MAARRRRSTG…VDPECTAKVG (103 aa)) are N-terminal region (NTR). Short sequence motifs (nuclear localization signal) lie at residues 21-22 (KR) and 35-40 (PAKKTR). 2 positions are modified to N6-acetyllysine: Lys37 and Lys38. The span at 57–67 (ANKDRTEDKQD) shows a compositional bias: basic and acidic residues. The WGR domain maps to 104–201 (KAHVYCEGND…EKFEKVPGKY (98 aa)). Phosphoserine is present on residues Ser226 and Ser232. The region spanning 231 to 348 (ESQLDLRVQE…DIEIAIKLVK (118 aa)) is the PARP alpha-helical domain. Positions 356-583 (HPLDQHYRNL…KVQFNFLQLW (228 aa)) constitute a PARP catalytic domain. NAD(+) is bound by residues 428 to 430 (HGS), Gly437, Arg444, and Ser470. Glu558 serves as the catalytic For poly [ADP-ribose] polymerase activity.

It belongs to the ARTD/PARP family. Component of a base excision repair (BER) complex, containing at least XRCC1, PARP1, POLB and LRIG3. Homo- and heterodimer with PARP1. Interacts (via the PARP catalytic domain) with HPF1. Interacts with core nucleosomes. Auto poly-ADP-ribosylated on serine residues, leading to dissociation of the PARP2-HPF1 complex from chromatin. Poly-ADP-ribosylated by PARP1. In terms of processing, acetylation reduces DNA binding and enzymatic activity. Post-translationally, proteolytically cleaved by caspase-8 (CASP8) in response to apoptosis, leading to its inactivation. In terms of tissue distribution, widely expressed, mainly in actively dividing tissues. The highest levels are in the brain, heart, pancreas, skeletal muscle and testis; also detected in kidney, liver, lung, placenta, ovary and spleen; levels are low in leukocytes, colon, small intestine, prostate and thymus.

Its subcellular location is the nucleus. It is found in the chromosome. The enzyme catalyses NAD(+) + (ADP-D-ribosyl)n-acceptor = nicotinamide + (ADP-D-ribosyl)n+1-acceptor + H(+).. It catalyses the reaction L-seryl-[protein] + NAD(+) = O-(ADP-D-ribosyl)-L-seryl-[protein] + nicotinamide + H(+). The catalysed reaction is L-aspartyl-[protein] + NAD(+) = 4-O-(ADP-D-ribosyl)-L-aspartyl-[protein] + nicotinamide. It carries out the reaction L-glutamyl-[protein] + NAD(+) = 5-O-(ADP-D-ribosyl)-L-glutamyl-[protein] + nicotinamide. ADP-ribosyltransferase activity is regulated via an allosteric activation mechanism. In absence of activation signal, PARP2 is autoinhibited by the PARP alpha-helical domain (also named HD region), which prevents effective NAD(+)-binding. Activity is highly stimulated by signals, which unfold the PARP alpha-helical domain, relieving autoinhibition. Poly-ADP-ribosyltransferase activity is tightly regulated and PARP2 is removed from damaged chromatin following initial poly-ADP-ribosylation of chromatin to avoid prolonged residence (trapping) that has cytotoxic consequences. CHD1L promotes PARP2 removal from chromatin. ADP-ribosyltransferase activity is inhibited by a number of PARP inhibitors (PARPi) compounds, that are used the treatment of breast or ovarian cancers that have defects in DNA repair by homologous recombination. PARPi molecules (niraparib, talazoparib, and, to a lesser extent, olaparib) also trap PARP2 at DNA damage sites. Poly-ADP-ribosyltransferase that mediates poly-ADP-ribosylation of proteins and plays a key role in DNA repair. Mediates glutamate, aspartate or serine ADP-ribosylation of proteins: the ADP-D-ribosyl group of NAD(+) is transferred to the acceptor carboxyl group of target residues and further ADP-ribosyl groups are transferred to the 2'-position of the terminal adenosine moiety, building up a polymer with an average chain length of 20-30 units. Serine ADP-ribosylation of proteins constitutes the primary form of ADP-ribosylation of proteins in response to DNA damage. Mediates glutamate and aspartate ADP-ribosylation of target proteins in absence of HPF1. Following interaction with HPF1, catalyzes serine ADP-ribosylation of target proteins; HPF1 conferring serine specificity by completing the PARP2 active site. PARP2 initiates the repair of double-strand DNA breaks: recognizes and binds DNA breaks within chromatin and recruits HPF1, licensing serine ADP-ribosylation of target proteins, such as histones, thereby promoting decompaction of chromatin and the recruitment of repair factors leading to the reparation of DNA strand breaks. HPF1 initiates serine ADP-ribosylation but restricts the polymerase activity of PARP2 in order to limit the length of poly-ADP-ribose chains. Specifically mediates formation of branched poly-ADP-ribosylation. Branched poly-ADP-ribose chains are specifically recognized by some factors, such as APLF. In addition to proteins, also able to ADP-ribosylate DNA: preferentially acts on 5'-terminal phosphates at DNA strand breaks termini in nicked duplex. In Homo sapiens (Human), this protein is Poly [ADP-ribose] polymerase 2.